We begin with the raw amino-acid sequence, 706 residues long: D-(-)-3-hydroxybutyrate oligomer hydrolase (706 aa).

Residues 1 to 32 (MTTTSKNCLTLTSIAAAVAAVLVLSACGGGSA) form the signal peptide. Catalysis depends on Ser311, which acts as the Charge relay system.

It belongs to the D-(-)-3-hydroxybutyrate oligomer hydrolase family.

The protein localises to the secreted. It carries out the reaction (3R)-hydroxybutanoate dimer + H2O = 2 (R)-3-hydroxybutanoate + H(+). It participates in lipid metabolism; butanoate metabolism. Participates in the degradation of poly-3-hydroxybutyrate (PHB). It works downstream of poly(3-hydroxybutyrate) depolymerase, hydrolyzing D(-)-3-hydroxybutyrate oligomers of various length (3HB-oligomers) into 3HB-monomers. The protein is D-(-)-3-hydroxybutyrate oligomer hydrolase of Polaromonas sp. (strain JS666 / ATCC BAA-500).